We begin with the raw amino-acid sequence, 199 residues long: Probable adenylyl-sulfate kinase (199 aa).

Gly-34–Ser-41 contributes to the ATP binding site. Ser-108 serves as the catalytic Phosphoserine intermediate.

Belongs to the APS kinase family.

The enzyme catalyses adenosine 5'-phosphosulfate + ATP = 3'-phosphoadenylyl sulfate + ADP + H(+). Its pathway is sulfur metabolism; hydrogen sulfide biosynthesis; sulfite from sulfate: step 2/3. Catalyzes the synthesis of activated sulfate. The polypeptide is Probable adenylyl-sulfate kinase (yisZ) (Bacillus subtilis (strain 168)).